A 433-amino-acid polypeptide reads, in one-letter code: Probable mannan endo-1,4-beta-mannosidase F (433 aa).

A signal peptide spans 1–19 (MKRQALTLIPLLGAAAAQS). One can recognise a CBM1 domain in the interval 20 to 53 (GPYGQCGGNDWSGATTCVSGYVCVYQNEWYSQCV). The thr-rich linker stretch occupies residues 56-82 (TATSSSTTLTTTTSATTRTTTTTTSTT). The catalytic stretch occupies residues 83 to 433 (SVPSSTNFPS…TEHMERIAAR (351 aa)). The N-linked (GlcNAc...) asparagine glycan is linked to N97. 2 residues coordinate substrate: W142 and N255. Residue E256 is the Proton donor of the active site. Y331 is a substrate binding site. E364 serves as the catalytic Nucleophile. W394 provides a ligand contact to substrate.

The protein belongs to the glycosyl hydrolase 5 (cellulase A) family.

It localises to the secreted. The catalysed reaction is Random hydrolysis of (1-&gt;4)-beta-D-mannosidic linkages in mannans, galactomannans and glucomannans.. Functionally, endo-1,4-mannanase, a crucial enzyme for depolymerization of seed galactomannans and wood galactoglucomannans. This chain is Probable mannan endo-1,4-beta-mannosidase F (manF), found in Emericella nidulans (strain FGSC A4 / ATCC 38163 / CBS 112.46 / NRRL 194 / M139) (Aspergillus nidulans).